Here is a 412-residue protein sequence, read N- to C-terminus: MDYKTYDPDLWNAIAREEERQENNLELIASENVVSKAVMAAQGSILTNKYAEGYPGKRYYGGCEFIDIVENLAIDRAKELFGAKFANVQAHSGSQANTAAYLSLVEPGDTILGMDLSAGGHLTHGSPVNFSGKTYNFVSYGVDPSTEVIDYDVVRILAREHRPKLIVAGASAYSRTIDFKRFREIADEVDAKLMVDMAHIAGLVASGLHPNPVPYADIVTSTTHKTLRGPRGGLILTNSEELAKKVNSSIFPGIQGGPLEHVIAGKAAAFKEALDPSFAEYSQQVIANAQAMTKVFNQAPEARLISGATDNHLLLIEVTGFGLNGKEAEAILDSVNITVNKNSIPFEQLSPFKTSGIRIGTPAITSRGFKEEDAVEVAKLIVQVLKDPENTAVHDEVKAAVAALTKKYPLYN.

(6S)-5,6,7,8-tetrahydrofolate contacts are provided by residues L116 and G120–L122. The residue at position 225 (K225) is an N6-(pyridoxal phosphate)lysine. Residues E241 and S350–F352 each bind (6S)-5,6,7,8-tetrahydrofolate.

Belongs to the SHMT family. Homodimer. Requires pyridoxal 5'-phosphate as cofactor.

It is found in the cytoplasm. The catalysed reaction is (6R)-5,10-methylene-5,6,7,8-tetrahydrofolate + glycine + H2O = (6S)-5,6,7,8-tetrahydrofolate + L-serine. The protein operates within one-carbon metabolism; tetrahydrofolate interconversion. It participates in amino-acid biosynthesis; glycine biosynthesis; glycine from L-serine: step 1/1. In terms of biological role, catalyzes the reversible interconversion of serine and glycine with tetrahydrofolate (THF) serving as the one-carbon carrier. This reaction serves as the major source of one-carbon groups required for the biosynthesis of purines, thymidylate, methionine, and other important biomolecules. Also exhibits THF-independent aldolase activity toward beta-hydroxyamino acids, producing glycine and aldehydes, via a retro-aldol mechanism. This Enterococcus faecalis (strain ATCC 700802 / V583) protein is Serine hydroxymethyltransferase.